The primary structure comprises 350 residues: Glucose-6-phosphate 3-dehydrogenase (350 aa).

It belongs to the Gfo/Idh/MocA family.

The catalysed reaction is D-glucose 6-phosphate + NAD(+) = 3-dehydro-D-glucose 6-phosphate + NADH + H(+). It participates in antibiotic biosynthesis; kanosamine biosynthesis. Its function is as follows. Involved in the biosynthesis of kanosamine (3-amino-3-deoxy-D-glucose), which is known to have antibiotic and antifungal properties, and to be a precursor of the antibiotic neotrehalosadiamine (3,3'-diamino-3,3'-dideoxy-alpha,beta-trehalose (NTD)). Catalyzes the oxidation of glucose 6-phosphate to 3-oxo-D-glucose 6-phosphate. It can only use NAD. The chain is Glucose-6-phosphate 3-dehydrogenase (ntdC) from Bacillus subtilis (strain 168).